A 289-amino-acid chain; its full sequence is Coiled-coil domain-containing protein 137 (289 aa).

3 disordered regions span residues 1-64 (MAGA…QEIP), 149-184 (EVQA…EKAA), and 204-225 (QPPE…GRRS). Positions 7 to 20 (GAAVSRVQAGPGSP) are enriched in low complexity. Serine 19 carries the phosphoserine modification. Residues 155-197 (KEKSEQKKAKKAFQKRRLDKVRRKKEEKAADRLEQELLRDTVK) are a coiled coil. Basic residues predominate over residues 162–177 (KAKKAFQKRRLDKVRR). Serine 233 is subject to Phosphoserine. A coiled-coil region spans residues 247-273 (RQRIVEEERERAVQAYRALKQRQQQLH). A disordered region spans residues 265-289 (LKQRQQQLHGERPHLTSRKKPEPQL). Residues 273–289 (HGERPHLTSRKKPEPQL) show a composition bias toward basic and acidic residues.

It localises to the chromosome. The chain is Coiled-coil domain-containing protein 137 (CCDC137) from Homo sapiens (Human).